A 941-amino-acid chain; its full sequence is MWTEKAAAMAEAQESGCRNKSSISRQTPVAGAVTEDDEAQGVFKPMDLNHVIKLLEETNKDGLEEKQLKFVKKLVQCYQNGLPLRDLAQIFKILNLCAGKIKNQPRFIESAYDIIKLCGLPFLKKKVSDEITYAEDTANSIALLGDLMKIPSSELRIQICKCIVDFYHAEPPKKHIPGYQQACSSYKIQMAEVGGLAKTMVQAVTLLENQLVEKLWVLKVLQHLSTSEVNCSIMMKAQAASGICAHLNDPDPSGQLLFRSSEILWNLLEKSSKEEILPQLSNLECLLALKEVFKNLFMRGFSHYDRQLRNDILVITTIIAQNPEAPMIECGFAKDLILFATFNEVKSQNILVKGLKLSNSYEDFELKKLLFNIIVILCKDLPTIQLLIEGSVVLALFTYVKKPEKQRTIDWSAAQYEELQLHAIATLSSVAPLLIEEYMSCQGNAQVLAFLEWCEIEDSFFSHGNSFHGTGGRGNKFAQMRYSLRLLRAMVYLEDETVNTDLCEKGTIQQMIGIFKNIISKTNEKEEAIVLEIQSDILLILSGLCEHHIQRKEIFGTEGVDIVLHVMKTDPRKLQSGLGYNVLLFSTLDSIWCCILGCYPSEDYFLEKEGIFLLLDVLALNEKKFCNLILGIMVEFCDNPKTAAHVNAWRGKKDQTAASLLIKLWRKEEKELGVKRDKNGKIIDTKKPLFTSFQEEQKIIPLPANCPSIAVMDVSENIRAKIYAILGKLDFENLPGLSAEDFVTLCIIHRYLDFKIGEIWNEIYEEIKLEKLRPVTTDKKALEAITTASENIGKMVASLQSEIIESQACQDVQNEQKVYAKIQATHKQRELANKSWGNFLARTSNAKTLKKAKRLQEKAIKASRYHERPQHAIFHPTDIKGLNTTVPSGGVVTVESTPARLVGGPLADTDIALKKLPIRGGALQRVKAVKIEEAPKKSIPT.

Its subcellular location is the cell projection. It localises to the cilium. It is found in the flagellum. Functionally, cilium- and flagellum-associated protein. In the olfactory epithelium, regulates the speed of activation and termination of the odor response and thus contributes to the robustness of olfactory transduction pathways. Required for sperm flagellum assembly and stability. This is Cilia- and flagella-associated protein 69 from Callithrix jacchus (White-tufted-ear marmoset).